Here is a 435-residue protein sequence, read N- to C-terminus: Xylose isomerase (435 aa).

Mg(2+) contacts are provided by Asp306 and Asp308.

Belongs to the xylose isomerase family. Homotetramer. Mg(2+) is required as a cofactor.

It is found in the cytoplasm. It catalyses the reaction alpha-D-xylose = alpha-D-xylulofuranose. The sequence is that of Xylose isomerase from Brucella melitensis biotype 2 (strain ATCC 23457).